Reading from the N-terminus, the 220-residue chain is ATP phosphoribosyltransferase (220 aa).

This sequence belongs to the ATP phosphoribosyltransferase family. Short subfamily. In terms of assembly, heteromultimer composed of HisG and HisZ subunits.

It localises to the cytoplasm. The enzyme catalyses 1-(5-phospho-beta-D-ribosyl)-ATP + diphosphate = 5-phospho-alpha-D-ribose 1-diphosphate + ATP. Its pathway is amino-acid biosynthesis; L-histidine biosynthesis; L-histidine from 5-phospho-alpha-D-ribose 1-diphosphate: step 1/9. Functionally, catalyzes the condensation of ATP and 5-phosphoribose 1-diphosphate to form N'-(5'-phosphoribosyl)-ATP (PR-ATP). Has a crucial role in the pathway because the rate of histidine biosynthesis seems to be controlled primarily by regulation of HisG enzymatic activity. The polypeptide is ATP phosphoribosyltransferase (Anaeromyxobacter sp. (strain Fw109-5)).